The following is a 62-amino-acid chain: Photosystem II reaction center protein Z (62 aa).

2 consecutive transmembrane segments (helical) span residues 8–28 and 41–61; these read AVFA…VVFS and FSGT…NSLI.

Belongs to the PsbZ family. PSII is composed of 1 copy each of membrane proteins PsbA, PsbB, PsbC, PsbD, PsbE, PsbF, PsbH, PsbI, PsbJ, PsbK, PsbL, PsbM, PsbT, PsbY, PsbZ, Psb30/Ycf12, at least 3 peripheral proteins of the oxygen-evolving complex and a large number of cofactors. It forms dimeric complexes.

It is found in the plastid. The protein resides in the chloroplast thylakoid membrane. Its function is as follows. May control the interaction of photosystem II (PSII) cores with the light-harvesting antenna, regulates electron flow through the 2 photosystem reaction centers. PSII is a light-driven water plastoquinone oxidoreductase, using light energy to abstract electrons from H(2)O, generating a proton gradient subsequently used for ATP formation. The protein is Photosystem II reaction center protein Z of Populus alba (White poplar).